The primary structure comprises 250 residues: HTH-type transcriptional regulator KipR (250 aa).

In terms of domain architecture, HTH iclR-type spans 5–65 (NKTVVKSMAL…DASGAYSLGL (61 aa)). The H-T-H motif DNA-binding region spans 26-45 (LSELVSLTGMPKTSVHRMVS). Residues 80-249 (IRKIAKPVME…ALQISRKIGY (170 aa)) form the IclR-ED domain.

Its function is as follows. Transcriptional repressor of the kip gene-containing operon. This chain is HTH-type transcriptional regulator KipR (kipR), found in Bacillus subtilis (strain 168).